A 442-amino-acid polypeptide reads, in one-letter code: Protein PhoH2 (442 aa).

The PINc domain occupies 3-135 (KIYVLDTNVL…LVSKDVLVRV (133 aa)). 259–266 (GKAGTGKT) lines the ATP pocket.

In the N-terminal section; belongs to the PINc/VapC protein family. The protein in the C-terminal section; belongs to the PhoH family.

It carries out the reaction n ATP + n H2O + wound RNA = n ADP + n phosphate + unwound RNA.. The catalysed reaction is ATP + H2O = ADP + phosphate + H(+). The enzyme catalyses GTP + H2O = GDP + phosphate + H(+). Unwinds and/or cleaves 5'-tailed RNA in vitro. Has ATPase and GTPase activities. Unlike the protein in mycobacteria there does not seem to be an antitoxin gene upstream, suggesting this is not a toxin-antitoxin system. This chain is Protein PhoH2, found in Bacillus subtilis (strain 168).